The primary structure comprises 395 residues: Acid ceramidase (395 aa).

An N-terminal signal peptide occupies residues 1-21 (MPGRSCVALVLLAAAVSCAVA). C31 and C340 form a disulfide bridge. C143 functions as the Nucleophile in the catalytic mechanism. Residues N173, N195, N259, N286, N342, and N348 are each glycosylated (N-linked (GlcNAc...) asparagine). The cysteines at positions 388 and 392 are disulfide-linked.

This sequence belongs to the acid ceramidase family. As to quaternary structure, heterodimer; disulfide-linked. The heterodimer is composed of the disulfide-linked alpha and beta chains produced by autocatalytic cleavage of the precursor. Isoform 2: May interact with NR5A1 in the nucleus; the direct interaction would negatively regulate NR5A1 transcriptional activity. Post-translationally, N-glycosylated. Proteolytically cleaved into two chains alpha and beta that remain associated via a disulfide bond. Cleavage gives rise to a conformation change that activates the enzyme. The same catalytic Cys residue mediates the autoproteolytic cleavage and subsequent hydrolysis of lipid substrates. The beta chain may undergo an additional C-terminal processing. In terms of tissue distribution, broadly expressed with higher expression in heart.

The protein localises to the lysosome. The protein resides in the secreted. It is found in the nucleus. It localises to the cytoplasm. The enzyme catalyses an N-acylsphing-4-enine + H2O = sphing-4-enine + a fatty acid. It carries out the reaction a beta-D-glucosyl-(1&lt;-&gt;1')-N-acylsphing-4-enine + H2O = beta-D-glucosyl-(1&lt;-&gt;1)-sphing-4-enine + a fatty acid. It catalyses the reaction a globoside Gb3Cer + H2O = a lysoGb3 + a fatty acid. The catalysed reaction is a globoside Gb3Cer (d18:1(4E)) + H2O = a lysoGb3(d18:1(4E)) + a fatty acid. The enzyme catalyses N-dodecanoylsphing-4-enine + H2O = dodecanoate + sphing-4-enine. It carries out the reaction N-tetradecanoylsphing-4-enine + H2O = tetradecanoate + sphing-4-enine. It catalyses the reaction N-hexadecanoylsphing-4-enine + H2O = sphing-4-enine + hexadecanoate. The catalysed reaction is N-octadecanoylsphing-4-enine + H2O = sphing-4-enine + octadecanoate. The enzyme catalyses N-dodecanoyl-(4R)-hydroxysphinganine + H2O = (4R)-hydroxysphinganine + dodecanoate. It carries out the reaction N-(dodecanoyl)-sphinganine + H2O = dodecanoate + sphinganine. It catalyses the reaction N-(acetyl)-sphing-4-enine + H2O = sphing-4-enine + acetate. The catalysed reaction is N-(hexanoyl)sphing-4-enine + H2O = hexanoate + sphing-4-enine. The enzyme catalyses N-octanoylsphing-4-enine + H2O = octanoate + sphing-4-enine. It carries out the reaction N-(9Z-octadecenoyl)-sphing-4-enine + H2O = sphing-4-enine + (9Z)-octadecenoate. It catalyses the reaction N-dodecanoylethanolamine + H2O = dodecanoate + ethanolamine. It participates in lipid metabolism; sphingolipid metabolism. With respect to regulation, activated by Ca(2+), Mg(2+) and Na(+) cations. Inhibited by Zn(2+). Phosphatidylserine and phosphatidic acid stimulate while cardiolipin, phosphatidylcholine, lysophosphatidylcholine, phosphatidylethanolamine, phosphatidylinositol and sphingomyelin inhibit the reverse ceramide synthase activity. Phosphatidic acid, phosphatidylinositol and C16-ceramide inhibit the ceramidase/hydrolase activity. Its function is as follows. Lysosomal ceramidase that hydrolyzes sphingolipid ceramides into sphingosine and free fatty acids at acidic pH. Ceramides, sphingosine, and its phosphorylated form sphingosine-1-phosphate are bioactive lipids that mediate cellular signaling pathways regulating several biological processes including cell proliferation, apoptosis and differentiation. Has a higher catalytic efficiency towards C12-ceramides versus other ceramides. Also catalyzes the reverse reaction allowing the synthesis of ceramides from fatty acids and sphingosine. For the reverse synthetic reaction, the natural sphingosine D-erythro isomer is more efficiently utilized as a substrate compared to D-erythro-dihydrosphingosine and D-erythro-phytosphingosine, while the fatty acids with chain lengths of 12 or 14 carbons are the most efficiently used. Also has an N-acylethanolamine hydrolase activity. By regulating the levels of ceramides, sphingosine and sphingosine-1-phosphate in the epidermis, mediates the calcium-induced differentiation of epidermal keratinocytes. Also indirectly regulates tumor necrosis factor/TNF-induced apoptosis. By regulating the intracellular balance between ceramides and sphingosine, in adrenocortical cells, probably also acts as a regulator of steroidogenesis. In terms of biological role, may directly regulate steroidogenesis by binding the nuclear receptor NR5A1 and negatively regulating its transcriptional activity. This is Acid ceramidase from Homo sapiens (Human).